Reading from the N-terminus, the 394-residue chain is Cell division protein FtsZ (394 aa).

Residues 21 to 25 (GGGGN), 108 to 110 (GTG), Glu-139, Arg-143, and Asp-187 each bind GTP.

It belongs to the FtsZ family. In terms of assembly, homodimer. Polymerizes to form a dynamic ring structure in a strictly GTP-dependent manner. Interacts directly with several other division proteins. Interacts with the SulA inhibitor.

The protein resides in the cytoplasm. In terms of biological role, essential cell division protein that forms a contractile ring structure (Z ring) at the future cell division site. The regulation of the ring assembly controls the timing and the location of cell division. One of the functions of the FtsZ ring is to recruit other cell division proteins to the septum to produce a new cell wall between the dividing cells. Binds GTP and shows GTPase activity. This Pseudomonas aeruginosa (strain ATCC 15692 / DSM 22644 / CIP 104116 / JCM 14847 / LMG 12228 / 1C / PRS 101 / PAO1) protein is Cell division protein FtsZ.